The sequence spans 911 residues: Probable dipeptidyl-aminopeptidase B (911 aa).

Residues 1–39 (MPRPRAAKEEETELLAQHQESPRPSSDGSEASASSISTT) are disordered. Residues 1–97 (MPRPRAAKEE…TPVDKKARRT (97 aa)) lie on the Cytoplasmic side of the membrane. The span at 25–39 (SSDGSEASASSISTT) shows a compositional bias: low complexity. The chain crosses the membrane as a helical; Signal-anchor for type II membrane protein span at residues 98-118 (LWIVGTICAVGWALALVSFLM). The Vacuolar segment spans residues 119–911 (NGNYKHSSTR…AQADARSLGR (793 aa)). N-linked (GlcNAc...) asparagine glycosylation is found at Asn268 and Asn564. The active-site Charge relay system is Ser755. The N-linked (GlcNAc...) asparagine glycan is linked to Asn809. Active-site charge relay system residues include Asp832 and His865.

This sequence belongs to the peptidase S9B family.

The protein localises to the vacuole membrane. It carries out the reaction Release of an N-terminal dipeptide, Xaa-Yaa-|-Zaa-, from a polypeptide, preferentially when Yaa is Pro, provided Zaa is neither Pro nor hydroxyproline.. Its function is as follows. Type IV dipeptidyl-peptidase which removes N-terminal dipeptides sequentially from polypeptides having unsubstituted N-termini provided that the penultimate residue is proline. This chain is Probable dipeptidyl-aminopeptidase B (DAPB), found in Phaeosphaeria nodorum (strain SN15 / ATCC MYA-4574 / FGSC 10173) (Glume blotch fungus).